The primary structure comprises 130 residues: Glycine cleavage system H protein (130 aa).

The Lipoyl-binding domain maps to 23–105; sequence IGIIGITDFA…YGKGWMIKVE (83 aa). Lysine 64 is subject to N6-lipoyllysine.

Belongs to the GcvH family. As to quaternary structure, the glycine cleavage system is composed of four proteins: P, T, L and H. (R)-lipoate is required as a cofactor.

Its function is as follows. The glycine cleavage system catalyzes the degradation of glycine. The H protein shuttles the methylamine group of glycine from the P protein to the T protein. This is Glycine cleavage system H protein from Carboxydothermus hydrogenoformans (strain ATCC BAA-161 / DSM 6008 / Z-2901).